Consider the following 427-residue polypeptide: UDP-N-acetylglucosamine 1-carboxyvinyltransferase (427 aa).

22–23 serves as a coordination point for phosphoenolpyruvate; that stretch reads KN. R92 contacts UDP-N-acetyl-alpha-D-glucosamine. The active-site Proton donor is D116. UDP-N-acetyl-alpha-D-glucosamine-binding residues include D312 and M334.

The protein belongs to the EPSP synthase family. MurA subfamily.

Its subcellular location is the cytoplasm. It carries out the reaction phosphoenolpyruvate + UDP-N-acetyl-alpha-D-glucosamine = UDP-N-acetyl-3-O-(1-carboxyvinyl)-alpha-D-glucosamine + phosphate. It functions in the pathway cell wall biogenesis; peptidoglycan biosynthesis. In terms of biological role, cell wall formation. Adds enolpyruvyl to UDP-N-acetylglucosamine. This Borreliella burgdorferi (strain ATCC 35210 / DSM 4680 / CIP 102532 / B31) (Borrelia burgdorferi) protein is UDP-N-acetylglucosamine 1-carboxyvinyltransferase.